Consider the following 66-residue polypeptide: Large ribosomal subunit protein bL33c (66 aa).

Belongs to the bacterial ribosomal protein bL33 family.

The protein localises to the plastid. It localises to the chloroplast. This chain is Large ribosomal subunit protein bL33c, found in Oenothera argillicola (Appalachian evening primrose).